Reading from the N-terminus, the 588-residue chain is Calcium/calmodulin-dependent protein kinase kinase 2 (588 aa).

The segment covering 1–14 (MSSCVSSQPSSNRA) has biased composition (polar residues). 2 disordered regions span residues 1–33 (MSSCVSSQPSSNRAAPQDELGGRGSSSSESQKP) and 78–100 (GQEVPLDTSGSQARPHLSGRKLS). N-acetylserine is present on Ser2. Ser100, Ser114, Ser129, Ser133, and Ser137 each carry phosphoserine. Low complexity predominate over residues 128–139 (YSPVSSPQSSPR). Residues 128-149 (YSPVSSPQSSPRLPRRPTVESH) are disordered. Residues 165–446 (YTLKDEIGKG…VPEIKLHPWV (282 aa)) enclose the Protein kinase domain. ATP is bound by residues 171 to 179 (IGKGSYGVV) and Lys194. An RP domain region spans residues 204-226 (QAGFPRRPPPRGTRPAPGGCIQP). The tract at residues 205–225 (AGFPRRPPPRGTRPAPGGCIQ) is disordered. Residue Asp312 is the Proton acceptor of the active site. Residues 472–477 (ENSVKH) form an autoinhibitory domain region. The interval 475 to 500 (VKHIPSLATVILVKTMIRKRSFGNPF) is calmodulin-binding. A phosphoserine mark is found at Pro479, Ser495, Ser511, Thr522, and Ser572. The tract at residues 497–588 (GNPFEGSRRE…LRPEEAMEPE (92 aa)) is disordered. Basic and acidic residues predominate over residues 521–536 (PTRECESLSELKEARQ). Basic and acidic residues predominate over residues 579 to 588 (LRPEEAMEPE).

The protein belongs to the protein kinase superfamily. Ser/Thr protein kinase family. In terms of assembly, interacts with calmodulin. Autophosphorylated and phosphorylated by PKA. Each isoform may show a different pattern of phosphorylation. As to expression, ubiquitously expressed with higher levels in the brain. Intermediate levels are detected in spleen, prostate, thyroid and leukocytes. The lowest level is in lung.

The protein localises to the nucleus. It is found in the cytoplasm. Its subcellular location is the cell projection. It localises to the neuron projection. The enzyme catalyses L-seryl-[protein] + ATP = O-phospho-L-seryl-[protein] + ADP + H(+). It carries out the reaction L-threonyl-[protein] + ATP = O-phospho-L-threonyl-[protein] + ADP + H(+). Its activity is regulated as follows. Activated by Ca(2+)/calmodulin. Binding of calmodulin may relieve intrasteric autoinhibition. Autophosphorylation does not alter activity or regulation by Ca(2+)/calmodulin. In part, activity is independent on Ca(2+)/calmodulin. In terms of biological role, calcium/calmodulin-dependent protein kinase belonging to a proposed calcium-triggered signaling cascade involved in a number of cellular processes. Isoform 1, isoform 2 and isoform 3 phosphorylate CAMK1 and CAMK4. Isoform 3 phosphorylates CAMK1D. Isoform 4, isoform 5 and isoform 6 lacking part of the calmodulin-binding domain are inactive. Efficiently phosphorylates 5'-AMP-activated protein kinase (AMPK) trimer, including that consisting of PRKAA1, PRKAB1 and PRKAG1. This phosphorylation is stimulated in response to Ca(2+) signals. Seems to be involved in hippocampal activation of CREB1. May play a role in neurite growth. Isoform 3 may promote neurite elongation, while isoform 1 may promoter neurite branching. This chain is Calcium/calmodulin-dependent protein kinase kinase 2 (CAMKK2), found in Homo sapiens (Human).